The chain runs to 210 residues: UPF0502 protein Sama_1967 (210 aa).

It belongs to the UPF0502 family.

The polypeptide is UPF0502 protein Sama_1967 (Shewanella amazonensis (strain ATCC BAA-1098 / SB2B)).